A 386-amino-acid chain; its full sequence is Chorismate synthase (386 aa).

The tract at residues 32-60 is disordered; sequence LPLSEDDVQRELDRRRPGQSGVSTPRSER. Positions 38–47 are enriched in basic and acidic residues; the sequence is DVQRELDRRR. An NADP(+)-binding site is contributed by R46. FMN-binding positions include 123 to 125, G290, 305 to 309, and R332; these read RAS and KPTPS.

The protein belongs to the chorismate synthase family. It depends on FMNH2 as a cofactor.

The catalysed reaction is 5-O-(1-carboxyvinyl)-3-phosphoshikimate = chorismate + phosphate. The protein operates within metabolic intermediate biosynthesis; chorismate biosynthesis; chorismate from D-erythrose 4-phosphate and phosphoenolpyruvate: step 7/7. In terms of biological role, catalyzes the anti-1,4-elimination of the C-3 phosphate and the C-6 proR hydrogen from 5-enolpyruvylshikimate-3-phosphate (EPSP) to yield chorismate, which is the branch point compound that serves as the starting substrate for the three terminal pathways of aromatic amino acid biosynthesis. This reaction introduces a second double bond into the aromatic ring system. This Methanopyrus kandleri (strain AV19 / DSM 6324 / JCM 9639 / NBRC 100938) protein is Chorismate synthase.